The primary structure comprises 225 residues: UPF0725 protein At5g63820 (225 aa).

The protein belongs to the UPF0725 (EMB2204) family.

In Arabidopsis thaliana (Mouse-ear cress), this protein is UPF0725 protein At5g63820.